Reading from the N-terminus, the 567-residue chain is Low-affinity glucose transporter HXT3 (567 aa).

Positions 1–29 (MNSTPDLISPQKSSENSNADLPSNSSQVM) are enriched in polar residues. A disordered region spans residues 1–30 (MNSTPDLISPQKSSENSNADLPSNSSQVMN). Over 1–57 (MNSTPDLISPQKSSENSNADLPSNSSQVMNMPEEKGVQDDFQAEADQVLTNPNTGKG) the chain is Cytoplasmic. At Ser23 the chain carries Phosphoserine. A helical transmembrane segment spans residues 58–78 (AYVTVSICCVMVAFGGFVFGW). Topologically, residues 79 to 113 (DTGTISGFVAQTDFLRRFGMKHKDGSYYLSKVRTG) are extracellular. Residues 114–134 (LIVSIFNIGCAIGGIILAKLG) traverse the membrane as a helical segment. The Cytoplasmic segment spans residues 135-140 (DMYGRK). A helical transmembrane segment spans residues 141–161 (MGLIVVVVIYIIGIIIQIASI). The Extracellular segment spans residues 162 to 171 (NKWYQYFIGR). Residues 172–192 (IISGLGVGGIAVLSPMLISEV) form a helical membrane-spanning segment. The Cytoplasmic portion of the chain corresponds to 193-198 (APKEMR). A helical transmembrane segment spans residues 199–219 (GTLVSCYQLMITLGIFLGYCT). At 220 to 233 (NFGTKNYSNSVQWR) the chain is on the extracellular side. N-linked (GlcNAc...) asparagine glycosylation occurs at Asn225. The chain crosses the membrane as a helical span at residues 234-254 (VPLGLCFAWALFMIGGMTFVP). Residues 255–337 (ESPRYLVEAG…IQSLQQLTGD (83 aa)) are Cytoplasmic-facing. Residues 338–354 (NYFFYYGTTVFNAVGMS) form a helical membrane-spanning segment. Residues 355 to 360 (DSFETS) are Extracellular-facing. Residues 361–378 (IVFGVVNFFSTCCSLYTV) traverse the membrane as a helical segment. The Cytoplasmic portion of the chain corresponds to 379-385 (DRFGRRN). Residues 386–406 (CLLYGAIGMVCCYVVYASVGV) form a helical membrane-spanning segment. The Extracellular portion of the chain corresponds to 407–428 (TRLWPNGEGNGSSKGAGNCMIV). A glycan (N-linked (GlcNAc...) asparagine) is linked at Asn416. Residues 429–449 (FACFYIFCFATTWAPIAYVVI) traverse the membrane as a helical segment. Residues 450–466 (SETFPLRVKSKAMSIAT) lie on the Cytoplasmic side of the membrane. Residues 467–487 (AANWLWGFLIGFFTPFITGAI) traverse the membrane as a helical segment. A topological domain (extracellular) is located at residue Asn488. The chain crosses the membrane as a helical span at residues 489-509 (FYYGYVFMGCMVFAYFYVFFF). Over 510 to 567 (VPETKGLTLEEVNDMYAEGVLPWKSASWVPTSQRGANYDADALMHDDQPFYKKMFGKK) the chain is Cytoplasmic.

This sequence belongs to the major facilitator superfamily. Sugar transporter (TC 2.A.1.1) family.

It localises to the membrane. In terms of biological role, low-affinity glucose transporter. The chain is Low-affinity glucose transporter HXT3 (HXT3) from Saccharomyces cerevisiae (strain ATCC 204508 / S288c) (Baker's yeast).